The primary structure comprises 338 residues: m7GpppX diphosphatase (338 aa).

Positions 1–36 are disordered; the sequence is MADTAPQLKRKREQEAEEAETPSTEEKEAGVGNGTS. Ala-2 is subject to N-acetylalanine. Positions 9 to 12 match the nuclear localization signal (NLS) motif; that stretch reads KRKR. 2 positions are modified to phosphoserine: Ser-23 and Ser-100. Lys-137 and Lys-141 each carry N6-acetyllysine. Residues 141–153 carry the nuclear export sequence (NES) motif; that stretch reads KYMRQDLRLIRET. Residues Trp-174, Glu-184, Asp-204, Lys-206, and 267 to 278 each bind substrate; that span reads HYLPSYYHLHVH. The short motif at 274–278 is the Histidine triad motif element; sequence HLHVH. The Nucleophile role is filled by His-276.

It belongs to the HIT family. Homodimer. Associates with components of the exosome multienzyme ribonuclease complex, such as EXOSC3 and EXOSC4. Interacts with NDOR1.

It localises to the cytoplasm. Its subcellular location is the nucleus. It carries out the reaction a 5'-end (N(7)-methyl 5'-triphosphoguanosine)-ribonucleoside in mRNA + H2O = N(7)-methyl-GMP + a 5'-end diphospho-ribonucleoside in mRNA + 2 H(+). The hydrolytic product 7-methylguanosine diphosphate (m7GDP) efficiently inhibits the decapping scavenger activity and acts as a competitive inhibitor in vitro. Inhibited by 2,4-diaminoquinazoline. Functionally, decapping scavenger enzyme that catalyzes the cleavage of a residual cap structure following the degradation of mRNAs by the 3'-&gt;5' exosome-mediated mRNA decay pathway. Hydrolyzes cap analog structures like 7-methylguanosine nucleoside triphosphate (m7GpppG) with up to 10 nucleotide substrates (small capped oligoribonucleotides) and specifically releases 5'-phosphorylated RNA fragments and 7-methylguanosine monophosphate (m7GMP). Cleaves cap analog structures like tri-methyl guanosine nucleoside triphosphate (m3(2,2,7)GpppG) with very poor efficiency. Does not hydrolyze unmethylated cap analog (GpppG) and shows no decapping activity on intact m7GpppG-capped mRNA molecules longer than 25 nucleotides. Does not hydrolyze 7-methylguanosine diphosphate (m7GDP) to m7GMP. May also play a role in the 5'-&gt;3 mRNA decay pathway; m7GDP, the downstream product released by the 5'-&gt;3' mRNA mediated decapping activity, may be also converted by DCPS to m7GMP. Binds to m7GpppG and strongly to m7GDP. Plays a role in first intron splicing of pre-mRNAs. Inhibits activation-induced cell death. The polypeptide is m7GpppX diphosphatase (Dcps) (Mus musculus (Mouse)).